The sequence spans 341 residues: Homeobox protein knotted-1-like 8 (341 aa).

The span at 1–17 shows a compositional bias: low complexity; it reads MESFASLAGGGSSSTTA. Disordered regions lie at residues 1-72, 121-148, and 187-207; these read MESF…AVQG, AAQQ…DQLD, and AESN…SDKQ. The span at 187 to 196 shows a compositional bias: polar residues; the sequence is AESNCEGTGS. Residues 207 to 227 form the ELK domain; sequence QLKHQLLRKYGGSLGDLRQVF. Positions 228 to 291 form a DNA-binding region, homeobox; TALE-type; the sequence is SKRTKKGKLP…NQRKRHWKPT (64 aa).

The protein belongs to the TALE/KNOX homeobox family.

The protein resides in the nucleus. Its function is as follows. Probable transcription factor that may be involved in shoot formation during embryogenesis. This Oryza sativa subsp. japonica (Rice) protein is Homeobox protein knotted-1-like 8 (OSH43).